We begin with the raw amino-acid sequence, 257 residues long: Staphylococcal secretory antigen SsaA (257 aa).

The signal sequence occupies residues 1–26 (MKKIATATIATAGIATFAFAHHDAQA). Tandem repeats lie at residues 73–75 (YNN), 76–78 (YNN), 84–86 (YNN), 87–89 (YSN), 90–92 (YNN), 93–95 (YSN), 96–98 (YNN), and 99–101 (YNN). Positions 73–101 (YNNYNNYNYYGYNNYSNYNNYSNYNNYNN) are 8 X 3 AA repeats of Y-[NS]-N. The segment at 101–144 (NYQSNNTQSQRTTQPTGGLGASYSTSSSNVHVTTTSAPSSNGVS) is disordered. Over residues 107 to 116 (TQSQRTTQPT) the composition is skewed to polar residues. The span at 122–136 (SYSTSSSNVHVTTTS) shows a compositional bias: low complexity. Residues 136-257 (SAPSSNGVSL…SQAASYNYIH (122 aa)) form the Peptidase C51 domain.

The protein resides in the secreted. Its function is as follows. Not known; immunogenic protein expressed during sepsis and particularly during episodes of infective endocarditis. This chain is Staphylococcal secretory antigen SsaA (ssaA), found in Staphylococcus epidermidis.